The chain runs to 407 residues: Nuclear hormone receptor family member nhr-134 (407 aa).

An NR C4-type zinc finger spans residues 11–31; it reads CEICGQKTSGRHFGVMSCRSC. The NR C4-type; degenerate zinc finger occupies 47–66; that stretch reads RCPNGNCKLLENGKFKCKKC. The NR LBD domain occupies 157-407; the sequence is QFHNSLERLA…FSEPDMFEST (251 aa).

The protein belongs to the nuclear hormone receptor family.

Its subcellular location is the nucleus. Its function is as follows. Orphan nuclear receptor. This chain is Nuclear hormone receptor family member nhr-134 (nhr-134), found in Caenorhabditis elegans.